The following is an 85-amino-acid chain: U4-theraphotoxin-Hhn1e (85 aa).

The first 22 residues, 1-22 (MKVTLIAILTCAAVLVLHTTAA), serve as a signal peptide directing secretion. Residues 23–48 (EELEAESQLMEVGMPDTELAAVDEER) constitute a propeptide that is removed on maturation. 3 disulfide bridges follow: cysteine 52–cysteine 66, cysteine 56–cysteine 77, and cysteine 71–cysteine 82.

Belongs to the neurotoxin 12 (Hwtx-2) family. 02 (Hwtx-2) subfamily. Expressed by the venom gland.

It is found in the secreted. Postsynaptic neurotoxin. The protein is U4-theraphotoxin-Hhn1e of Cyriopagopus hainanus (Chinese bird spider).